Consider the following 383-residue polypeptide: Polyketide synthase 4 (383 aa).

Catalysis depends on C164, which acts as the Nucleophile and monoketide coumarate intermediate.

It belongs to the thiolase-like superfamily. Chalcone/stilbene synthases family. Homodimer. In terms of tissue distribution, expressed in fruits.

The enzyme catalyses 4-coumaroyl-CoA + malonyl-CoA + H2O + H(+) = 4-hydroxybenzalacetone + 2 CO2 + 2 CoA. It carries out the reaction (E)-4-coumaroyl-CoA + 3 malonyl-CoA + 3 H(+) = 2',4,4',6'-tetrahydroxychalcone + 3 CO2 + 4 CoA. It functions in the pathway secondary metabolite biosynthesis; flavonoid biosynthesis. Inhibited by glutathione. Bifunctional polyketide synthase producing both 4-hydroxybenzalacetone and naringenin chalcone. Can use p-coumaryl-CoA and ferulyl-CoA as substrates. Catalyzes the initial key reaction step in the biosynthesis of phenylbutanoids. This is Polyketide synthase 4 (PKS4) from Rubus idaeus (Raspberry).